The chain runs to 422 residues: Glycine amidinotransferase, mitochondrial (422 aa).

The transit peptide at 1-37 (MLRVRCLRGGSRGAEAVHYIGSMLRKSFVGWVQRSFQ) directs the protein to the mitochondrion. Catalysis depends on residues aspartate 253 and histidine 302. Cysteine 406 functions as the Amidino-cysteine intermediate in the catalytic mechanism.

This sequence belongs to the amidinotransferase family. In terms of assembly, homodimer. As to expression, ubiquitously expressed in adult tissues, with highest levels in muscle and intermediate levels in eye, heart, liver, stomach and testis. In stage 28 embryos, expression is higher in the dorsal and ventral parts of the trunk than in the head. In middle gastrulae, expression is highest around the yolk plug, while in stage 15 and tailbud stage embryos, expression is largely restricted to the region around the presumptive notochord and gut.

It is found in the mitochondrion inner membrane. It catalyses the reaction L-arginine + glycine = guanidinoacetate + L-ornithine. Its pathway is amine and polyamine biosynthesis; creatine biosynthesis; creatine from L-arginine and glycine: step 1/2. Its function is as follows. Catalyzes the biosynthesis of guanidinoacetate, the immediate precursor of creatine. Creatine plays a vital role in energy metabolism in muscle tissues. May play a role in embryonic and central nervous system development. In Xenopus laevis (African clawed frog), this protein is Glycine amidinotransferase, mitochondrial.